We begin with the raw amino-acid sequence, 484 residues long: MEAACLVRSLGLPQGEEALKARLRRPGHPRLREALAAYLKRLQAPEEAFRALERLEVGAVVTGQQAGLLGGPALTFYKAHTALCLADRAGAAGVFWVASQDHDVEEVRHLHLLRDEVPETLSLDLPPLPSGRIPLAPHRERLRAFLGPWAKDYRLGYALEAETLSEFFARVLLAFLGERGLVPFDPMAEELAPLFLEALERELSDPLGSAEAINREAERIRALGGKPPLRRKPGATNLFLETDQRRLLFYEGGAFTDGVRRYTAKELWEIARADPSRLTPAAGLRPVFQDLVLPTAGFVVGPNELRYVAELSGVYARYGLAMPALFLRAFGVVVEPPVRRILEKYRLDPWAFVDEGEAAFLRAAEAWLAPFRAFRDRVEGLLQEASRLVEEAEALEPNLVRPLRRFRARVGGEAERLRRKLLAAQAARDEVLARHLGRLKVHLLPFGLPQERVYPYAMYALRHGEALRRLAEAPWEGRVALYLG.

A coiled-coil region spans residues 372–435; sequence RAFRDRVEGL…AARDEVLARH (64 aa).

Belongs to the BshC family.

This chain is Putative cysteine ligase BshC, found in Thermus thermophilus (strain ATCC 27634 / DSM 579 / HB8).